Reading from the N-terminus, the 447-residue chain is 3-phosphoshikimate 1-carboxyvinyltransferase 2 (447 aa).

Positions 40, 41, and 45 each coordinate 3-phosphoshikimate. A phosphoenolpyruvate-binding site is contributed by Lys-40. Positions 109 and 138 each coordinate phosphoenolpyruvate. 5 residues coordinate 3-phosphoshikimate: Ser-184, Ser-185, Gln-186, Asp-329, and His-356. Gln-186 is a binding site for phosphoenolpyruvate. Asp-329 functions as the Proton acceptor in the catalytic mechanism. Phosphoenolpyruvate contacts are provided by Arg-360, Arg-403, and Lys-428.

It belongs to the EPSP synthase family. In terms of assembly, monomer.

The protein resides in the cytoplasm. The enzyme catalyses 3-phosphoshikimate + phosphoenolpyruvate = 5-O-(1-carboxyvinyl)-3-phosphoshikimate + phosphate. The protein operates within metabolic intermediate biosynthesis; chorismate biosynthesis; chorismate from D-erythrose 4-phosphate and phosphoenolpyruvate: step 6/7. Its function is as follows. Catalyzes the transfer of the enolpyruvyl moiety of phosphoenolpyruvate (PEP) to the 5-hydroxyl of shikimate-3-phosphate (S3P) to produce enolpyruvyl shikimate-3-phosphate and inorganic phosphate. The protein is 3-phosphoshikimate 1-carboxyvinyltransferase 2 of Halalkalibacterium halodurans (strain ATCC BAA-125 / DSM 18197 / FERM 7344 / JCM 9153 / C-125) (Bacillus halodurans).